The primary structure comprises 497 residues: MGLDALVPLAVTVAIFVLLVDLMHRRQRWAARYPPGPMPLPGLGNLLHVDFQNTPNSFNQLRRRFGDVFSLQLAWTPVVVLNGLEAVREALVTRGEDTADRPPVPITEMLGFGPHSQGLFLARYGPAWREQRRFSVSTLRNLGLGKKSLEQWVTEEATYLCAAFADHAGRPFRPNGLLDKAVSNVIASLTCRRRFEYNDPCLLRLLDLTMEGLKEESGLLREVLNAIPVLLRIPGLAGKVLRSQKAFLAQLDELLTEHRMTWDPAQPPRDLTEAFLAEMEKTKGNPESSFNDENLHLVVADLFSAGMVTTSITLAWGLLLMILHPDVQRRVQQEIDDVIGRVRRPEMGDQTYMPYTTAVIHEVQRFADIVPLGVTHMTSRDIEVQGFLIPKGTTLFTNLSSVLKDEANWEKPFRFHPEHFLDAQGRFVKPEAFLPFSAGRRACLGEPLARMELFLFFTCLLQRFSFSVPAGQPRPSPHGVFAFLVTPSPYELCAVPR.

Cys-443 serves as a coordination point for heme.

The protein belongs to the cytochrome P450 family. The cofactor is heme.

The protein localises to the endoplasmic reticulum membrane. Its subcellular location is the microsome membrane. It carries out the reaction an organic molecule + reduced [NADPH--hemoprotein reductase] + O2 = an alcohol + oxidized [NADPH--hemoprotein reductase] + H2O + H(+). In terms of biological role, responsible for the metabolism of many drugs and environmental chemicals that it oxidizes. This chain is Cytochrome P450 2D19 (CYP2D19), found in Callithrix jacchus (White-tufted-ear marmoset).